Here is a 236-residue protein sequence, read N- to C-terminus: Exotoxin type H (236 aa).

The signal sequence occupies residues 1–32 (MRYNCRYSHIDKKIYSMIICLSFLLYSNVVQA).

It belongs to the staphylococcal/streptococcal toxin family.

The protein localises to the secreted. Mitogenic for human peripheral blood lymphocytes. The chain is Exotoxin type H (speH) from Streptococcus pyogenes serotype M1.